A 969-amino-acid chain; its full sequence is Lateral signaling target protein 2 homolog (969 aa).

Residue lysine 87 forms a Glycyl lysine isopeptide (Lys-Gly) (interchain with G-Cter in ubiquitin) linkage. Disordered regions lie at residues 290–323 (QDGE…GVEE), 336–360 (SVWK…EEPI), 390–437 (STLL…YHDD), and 715–777 (RSEC…DMSE). Over residues 295 to 310 (PTSSTNDPSASTGPDS) the composition is skewed to polar residues. The segment covering 336-346 (SVWKEEEEKQV) has biased composition (basic and acidic residues). Positions 391–402 (TLLSPPSQNQSP) are enriched in polar residues. Residues 411–423 (GSSLEGSSATSST) are compositionally biased toward low complexity. Basic and acidic residues predominate over residues 715–729 (RSECFGKQSKDDNRK). 2 stretches are compositionally biased toward low complexity: residues 732-745 (SSSQ…VPSS) and 756-769 (SLSS…VSSL). The segment at 899–959 (DEACNSCIAC…VCTHCYMFHV (61 aa)) adopts an FYVE-type zinc-finger fold. Zn(2+) contacts are provided by cysteine 905, cysteine 908, cysteine 921, cysteine 924, cysteine 929, cysteine 932, cysteine 951, and cysteine 954.

It belongs to the lst-2 family. Post-translationally, monoubiquitination at Lys-87 prevents binding to phosphatidylinositol 3-phosphate (PI3P) and localization to early endosome membranes.

It is found in the cytoplasm. The protein localises to the cytosol. It localises to the early endosome membrane. Functionally, negative regulator of epidermal growth factor receptor (EGFR) signaling. Acts by promoting EGFR degradation in endosomes when not monoubiquitinated. The sequence is that of Lateral signaling target protein 2 homolog (zfyve28) from Danio rerio (Zebrafish).